Consider the following 599-residue polypeptide: Dehydrogenase eriK (599 aa).

An N-terminal signal peptide occupies residues 1–20 (MAFLKARLAALLSVAVSCSA). FAD is bound by residues 43–44 (TA) and 64–65 (EG). A glycan (N-linked (GlcNAc...) asparagine) is linked at Asn-93. 122–125 (NGMY) is an FAD binding site. N-linked (GlcNAc...) asparagine glycosylation is found at Asn-169, Asn-191, Asn-234, Asn-260, Asn-284, Asn-319, Asn-339, Asn-353, Asn-365, Asn-370, Asn-398, Asn-456, and Asn-518. FAD-binding positions include Ala-569 and 580–581 (TQ).

Belongs to the GMC oxidoreductase family. Homodimer. Requires FAD as cofactor.

Dehydrogenase; part of the gene cluster that mediates the biosynthesis of erinacines, cyathane-xylosides that show unique biological activities, including leishmanicidal activity, stimulating activity for nerve growth-factor synthesis, and agonistic activity toward the kappa opioid receptor. The role of the dehydrogenase eriK within the pathway has still to be determined. The first step of the erinacines biosynthesis pathway is catalyzed by the geranylgeranyl diphosphate (GGPP) synthase eriE via conversion of farnesyl pyrophosphate and isopentyl pyrophosphate into geranylgeranyl pyrophosphate (GGPP). GGPP is then substrate of the diterpene cyclase eriG for the production of cyatha-3,12-diene. The cytochrome P450 monooxygenase eriI then hydroxylates cyatha-3,12-diene at C-14 of the seven-membered ring to produce erinacol, which is further hydroxylated at C-15 by the cytochrome P450 monooxygenase eriC to yield cyathadiol. The cytochrome P450 monooxygenase eriA then catalyzes C-11 hydroxylation in the presence of the short chain dehydrogenase/reductase (SDR) eriH, which leads to the production of cyathatriol. The acetyltransferase eriL converts cyathatriol into 11-O-acetyl-cyathatriol. The SDR eriH catalyzes further oxidation of 11-O-acetyl-cyathatriol into 1-O-acetylcyathin A3. Finally, the glycosyl transferase eriJ tranfers xylose from UDP-xylose onto C-14 of 11-O-acetyl-cyathatriol to form eracine Q. EriJ is also able to convert 11-O-acetyl-cyathatriol to eracine Q2 by using UDP-D-glucose as cosubstrate, but at a lower rate. The sequence is that of Dehydrogenase eriK from Hericium erinaceus (Lion's mane mushroom).